Here is a 37-residue protein sequence, read N- to C-terminus: Large ribosomal subunit protein bL36B (37 aa).

Belongs to the bacterial ribosomal protein bL36 family.

The chain is Large ribosomal subunit protein bL36B from Kineococcus radiotolerans (strain ATCC BAA-149 / DSM 14245 / SRS30216).